The sequence spans 192 residues: Interleukin-18 (192 aa).

Positions 1–35 (MAAEPEDNCISFVEMKFINNTLYFVAENDEDLESD) are excised as a propeptide.

Belongs to the IL-1 family. In terms of assembly, forms a ternary complex with ligand-binding receptor subunit IL18R1 and signaling receptor subunit IL18RAP at the plasma membrane. Mature IL18 first binds to IL18R1 forming a low affinity binary complex, which then interacts with IL18RAP to form a high affinity ternary complex that signals inside the cell. Interacts with cargo receptor TMED10; the interaction mediates the translocation from the cytoplasm into the ERGIC (endoplasmic reticulum-Golgi intermediate compartment) and thereby secretion. Post-translationally, the pro-IL-18 precursor is processed by CASP1, CASP4 or CASP5 to yield its mature, active form. The pro-IL-18 precursor features autoinhibitory interactions between the propeptide and the post-cleavage-site region, preventing recognition by the IL18R1 receptor. Processing by CASP1, CASP4 or CASP5 induces conformational changes to generate critical receptor-binding sites. The mature form is then secreted and released in the extracellular milieu by passing through the gasdermin-D (GSDMD) pore. In contrast, cleavage by CASP3 inactivates IL18.

Its subcellular location is the cytoplasm. It is found in the cytosol. It localises to the secreted. Its function is as follows. Pro-inflammatory cytokine primarily involved in epithelial barrier repair, polarized T-helper 1 (Th1) cell and natural killer (NK) cell immune responses. Upon binding to IL18R1 and IL18RAP, forms a signaling ternary complex which activates NF-kappa-B, triggering synthesis of inflammatory mediators. Synergizes with IL12/interleukin-12 to induce IFNG synthesis from T-helper 1 (Th1) cells and natural killer (NK) cells. Involved in transduction of inflammation downstream of pyroptosis: its mature form is specifically released in the extracellular milieu by passing through the gasdermin-D (GSDMD) pore. This chain is Interleukin-18 (IL18), found in Sus scrofa (Pig).